The primary structure comprises 741 residues: MKESFYIEGMTCTACSSGIERSLGRKSFVKKIEVSLLNKSANIEFNENETNLDEIFKLIEKLGYSPKKTLAEEKKEFFSPNVKLALAVIFTLFVVYLSMGAMLSPSLLPESLLTINNHSNFLNACLQLIGTLIVMHLGRDFYIQGFKALWHRQPNMSSLIAIGTSAALISSLWQLYFVYTSQWSYGHYYFESVCVILMFVMVGKRIENVSKDKALDAMQALMKNAPKTALKMHNNQQIEVLVDSIVVGDILKVLPGSAIAVDGEIIEGEGELDESMLSGEALPVYKKVGDKVFSGTFNSHTSFLMKATQDNKNSTLSQIVEMIHNAQSSKAEISRLADKVSSVFVPSVIAIAILAFVVWLIIAPKPDFWWNFGIALEVFVSVLVISCPCALGLATPMSILVANQKASSLGLFFKDAKSLEKARLVNTIVFDKTGTLTNGKPVVKSVHSNIELLELLSLAGSIEKSSEHVIAKGIVEYAKEHNAPLKEMSEVKVKTGFGISAKTDYQGAKEVIKVGNSEFFNPINALEIQENGILVFVGRVISEKEDELLGAFVLEDLPKKGVKEHIAQIKKLGINTFLLSGDNRENVKKCALELGIDGYISNAKPQDKLNKIKELKEKGQIVMMVGDGLNDAPSLAMSDVAVVMAKGSDVSVQAADIVSFNNDIKSVYSAIKLSQATIKNIKENLFWAFCYNSVFIPLACGVLYKANIMLSPAIAGLAMSLSSVSVVLNSQRLRNFKIKDH.

Positions 1 to 67 constitute an HMA domain; it reads MKESFYIEGM…LIEKLGYSPK (67 aa). The Cytoplasmic segment spans residues 1–83; the sequence is MKESFYIEGM…KKEFFSPNVK (83 aa). Cu cation is bound by residues Cys-12 and Cys-15. A helical transmembrane segment spans residues 84 to 104; the sequence is LALAVIFTLFVVYLSMGAMLS. Topologically, residues 105–124 are extracellular; the sequence is PSLLPESLLTINNHSNFLNA. A helical transmembrane segment spans residues 125–144; the sequence is CLQLIGTLIVMHLGRDFYIQ. Residues 145-151 are Cytoplasmic-facing; it reads GFKALWH. A helical membrane pass occupies residues 152-172; the sequence is RQPNMSSLIAIGTSAALISSL. At 173–190 the chain is on the extracellular side; it reads WQLYFVYTSQWSYGHYYF. Residues 191 to 211 form a helical membrane-spanning segment; it reads ESVCVILMFVMVGKRIENVSK. At 212-339 the chain is on the cytoplasmic side; that stretch reads DKALDAMQAL…KAEISRLADK (128 aa). Residues 340–362 form a helical membrane-spanning segment; it reads VSSVFVPSVIAIAILAFVVWLII. At 363–375 the chain is on the extracellular side; the sequence is APKPDFWWNFGIA. A helical transmembrane segment spans residues 376–393; that stretch reads LEVFVSVLVISCPCALGL. Residues 394–681 are Cytoplasmic-facing; it reads ATPMSILVAN…KLSQATIKNI (288 aa). Residue Asp-431 is the 4-aspartylphosphate intermediate of the active site. 2 residues coordinate Mg(2+): Asp-627 and Asp-631. A helical membrane pass occupies residues 682-701; it reads KENLFWAFCYNSVFIPLACG. Over 702 to 712 the chain is Extracellular; it reads VLYKANIMLSP. The helical transmembrane segment at 713–731 threads the bilayer; it reads AIAGLAMSLSSVSVVLNSQ. Residues 732-741 lie on the Cytoplasmic side of the membrane; it reads RLRNFKIKDH.

The protein belongs to the cation transport ATPase (P-type) (TC 3.A.3) family. Type IB subfamily.

The protein localises to the cell membrane. The catalysed reaction is Cu(2+)(in) + ATP + H2O = Cu(2+)(out) + ADP + phosphate + H(+). Functionally, probably involved in copper export. This Helicobacter pylori (Campylobacter pylori) protein is Copper-transporting ATPase (copA).